A 215-amino-acid polypeptide reads, in one-letter code: Small ribosomal subunit protein uS5 (215 aa).

Positions 1-62 (MTDSSPQSNP…QERDSEWQER (62 aa)) are disordered. Residues 9-28 (NPNAVPGAADVPAAAEGQQQ) are compositionally biased toward low complexity. Positions 29–61 (EQRRGGGRGERGDRRGGRRGDRRNQERDSEWQE) are enriched in basic and acidic residues. The S5 DRBM domain maps to 59-122 (WQERVVQIRR…ADGKKHLVKV (64 aa)).

The protein belongs to the universal ribosomal protein uS5 family. As to quaternary structure, part of the 30S ribosomal subunit. Contacts proteins S4 and S8.

Its function is as follows. With S4 and S12 plays an important role in translational accuracy. Functionally, located at the back of the 30S subunit body where it stabilizes the conformation of the head with respect to the body. The sequence is that of Small ribosomal subunit protein uS5 from Parasynechococcus marenigrum (strain WH8102).